Here is a 940-residue protein sequence, read N- to C-terminus: Isoleucine--tRNA ligase (940 aa).

The 'HIGH' region signature appears at 58–68 (PYANGNIHIGH). Glu-563 is a binding site for L-isoleucyl-5'-AMP. The short motif at 604–608 (KMSKS) is the 'KMSKS' region element. Lys-607 provides a ligand contact to ATP. Zn(2+) contacts are provided by Cys-903, Cys-906, Cys-923, and Cys-926.

It belongs to the class-I aminoacyl-tRNA synthetase family. IleS type 1 subfamily. Monomer. Requires Zn(2+) as cofactor.

The protein localises to the cytoplasm. It catalyses the reaction tRNA(Ile) + L-isoleucine + ATP = L-isoleucyl-tRNA(Ile) + AMP + diphosphate. Functionally, catalyzes the attachment of isoleucine to tRNA(Ile). As IleRS can inadvertently accommodate and process structurally similar amino acids such as valine, to avoid such errors it has two additional distinct tRNA(Ile)-dependent editing activities. One activity is designated as 'pretransfer' editing and involves the hydrolysis of activated Val-AMP. The other activity is designated 'posttransfer' editing and involves deacylation of mischarged Val-tRNA(Ile). This Buchnera aphidicola subsp. Acyrthosiphon pisum (strain APS) (Acyrthosiphon pisum symbiotic bacterium) protein is Isoleucine--tRNA ligase.